Here is a 61-residue protein sequence, read N- to C-terminus: Bactericidin B-5P (61 aa).

Positions 1–22 are cleaved as a signal peptide; the sequence is MNFSRVLFFVFACLSAFAMASA. Residues 23–24 constitute a propeptide, removed by a dipeptidylpeptidase; sequence AP. Gly60 is modified (glycine amide).

It belongs to the cecropin family.

The protein localises to the secreted. Functionally, cecropins have lytic and antibacterial activity against several Gram-positive and Gram-negative bacteria. This Manduca sexta (Tobacco hawkmoth) protein is Bactericidin B-5P.